The primary structure comprises 267 residues: Putative N-acetylmuramoyl-L-alanine amidase RC0497 (267 aa).

Residues 1–25 form a disordered region; that stretch reads MSKSKAIENNGISNTNSPNGKYMAP. Residues 10-19 are compositionally biased toward polar residues; it reads NGISNTNSPN. Positions 33 to 141 constitute an N-acetylmuramoyl-L-alanine amidase domain; it reads TCVVITYSVS…NLDLKHDLVG (109 aa).

It belongs to the N-acetylmuramoyl-L-alanine amidase 2 family.

It localises to the secreted. The enzyme catalyses Hydrolyzes the link between N-acetylmuramoyl residues and L-amino acid residues in certain cell-wall glycopeptides.. The sequence is that of Putative N-acetylmuramoyl-L-alanine amidase RC0497 from Rickettsia conorii (strain ATCC VR-613 / Malish 7).